We begin with the raw amino-acid sequence, 417 residues long: Fructose-1,6-bisphosphatase 1, chloroplastic (417 aa).

The N-terminal 59 residues, 1-59 (MAATAATTTSSHLLLSSSRHVASSSQPSILSPRSLFSNNGKRAPTGVRNHQYASGVRCM), are a transit peptide targeting the chloroplast. Residues 24-35 (SSQPSILSPRSL) are compositionally biased toward low complexity. Positions 24 to 48 (SSQPSILSPRSLFSNNGKRAPTGVR) are disordered. Ala-60 carries the N-acetylalanine modification. Mg(2+) contacts are provided by Glu-138, Glu-167, Asp-188, Leu-190, and Asp-191. 191-194 (DGSS) is a binding site for substrate. Cys-233 and Cys-238 are joined by a disulfide. Substrate-binding residues include Asn-297, Tyr-329, Tyr-347, Tyr-349, and Lys-359. Position 365 (Glu-365) interacts with Mg(2+).

The protein belongs to the FBPase class 1 family. In terms of assembly, homotetramer. Mg(2+) is required as a cofactor.

It is found in the plastid. The protein resides in the chloroplast stroma. It carries out the reaction beta-D-fructose 1,6-bisphosphate + H2O = beta-D-fructose 6-phosphate + phosphate. The protein operates within carbohydrate biosynthesis; Calvin cycle. Its function is as follows. Catalyzes the irreversible reaction from fructose-1,6-bisphosphate to fructose-6-phosphate and inorganic phosphate, to regenerate the primary CO(2) acceptor molecule, ribulose-1,5-bisphosphate. Involved in the regulation of photosynthetic electron flow and sucrose synthesis. Its activity is critical for normal plant development and important for the regulation of a wide range of metabolic processes. The protein is Fructose-1,6-bisphosphatase 1, chloroplastic of Arabidopsis thaliana (Mouse-ear cress).